Here is a 600-residue protein sequence, read N- to C-terminus: Glutamine--fructose-6-phosphate aminotransferase [isomerizing] (600 aa).

Residue C2 is the Nucleophile; for GATase activity of the active site. One can recognise a Glutamine amidotransferase type-2 domain in the interval 2-217 (CGIVGYIGQL…DKEMVIVTDD (216 aa)). SIS domains lie at 283–422 (IAAA…KNGI) and 452–590 (IARE…VDKP). K595 acts as the For Fru-6P isomerization activity in catalysis.

As to quaternary structure, homodimer.

Its subcellular location is the cytoplasm. It catalyses the reaction D-fructose 6-phosphate + L-glutamine = D-glucosamine 6-phosphate + L-glutamate. Its function is as follows. Catalyzes the first step in hexosamine metabolism, converting fructose-6P into glucosamine-6P using glutamine as a nitrogen source. The chain is Glutamine--fructose-6-phosphate aminotransferase [isomerizing] (glmS) from Bacillus spizizenii (strain ATCC 23059 / NRRL B-14472 / W23) (Bacillus subtilis subsp. spizizenii).